The chain runs to 441 residues: 3-phosphoshikimate 1-carboxyvinyltransferase (441 aa).

A disordered region spans residues 1-24; that stretch reads MSGTGQSDDPRELKAGGSLQGRVK. Positions 29, 30, and 34 each coordinate 3-phosphoshikimate. Position 29 (Lys29) interacts with phosphoenolpyruvate. Phosphoenolpyruvate-binding residues include Gly103 and Arg132. 3-phosphoshikimate is bound by residues Ser177, Gln179, Asp328, and Lys355. Gln179 lines the phosphoenolpyruvate pocket. Asp328 functions as the Proton acceptor in the catalytic mechanism. Phosphoenolpyruvate contacts are provided by Arg359 and Arg401.

It belongs to the EPSP synthase family. Monomer.

The protein resides in the cytoplasm. The catalysed reaction is 3-phosphoshikimate + phosphoenolpyruvate = 5-O-(1-carboxyvinyl)-3-phosphoshikimate + phosphate. It functions in the pathway metabolic intermediate biosynthesis; chorismate biosynthesis; chorismate from D-erythrose 4-phosphate and phosphoenolpyruvate: step 6/7. Its function is as follows. Catalyzes the transfer of the enolpyruvyl moiety of phosphoenolpyruvate (PEP) to the 5-hydroxyl of shikimate-3-phosphate (S3P) to produce enolpyruvyl shikimate-3-phosphate and inorganic phosphate. This chain is 3-phosphoshikimate 1-carboxyvinyltransferase, found in Synechococcus sp. (strain CC9605).